A 1690-amino-acid polypeptide reads, in one-letter code: DNA-directed RNA polymerase subunit beta' (1690 aa).

Positions 63, 65, 78, and 81 each coordinate Zn(2+). Residues Asp753, Asp755, and Asp757 each contribute to the Mg(2+) site. 4 residues coordinate Zn(2+): Cys1107, Cys1295, Cys1302, and Cys1305.

Belongs to the RNA polymerase beta' chain family. In terms of assembly, the RNAP catalytic core consists of 2 alpha, 1 beta, 1 beta' and 1 omega subunit. When a sigma factor is associated with the core the holoenzyme is formed, which can initiate transcription. Mg(2+) is required as a cofactor. Zn(2+) serves as cofactor.

It carries out the reaction RNA(n) + a ribonucleoside 5'-triphosphate = RNA(n+1) + diphosphate. DNA-dependent RNA polymerase catalyzes the transcription of DNA into RNA using the four ribonucleoside triphosphates as substrates. The chain is DNA-directed RNA polymerase subunit beta' from Thermotoga sp. (strain RQ2).